A 202-amino-acid chain; its full sequence is Transmembrane 4 L6 family member 4 (202 aa).

The Cytoplasmic segment spans residues 1–9 (MCTGGCARC). Residues 10 to 30 (LGGTLIPLAFFGFLANILLFF) form a helical membrane-spanning segment. At 31 to 45 (PGGKVIDDNDHLSQE) the chain is on the extracellular side. The helical transmembrane segment at 46–66 (IWFFGGILGSGVLMIFPALVF) threads the bilayer. The Cytoplasmic portion of the chain corresponds to 67-93 (LGLKNNDCCGCCGNEGCGKRFAMFTST). A helical membrane pass occupies residues 94–114 (IFAVVGFLGAGYSFIISAISI). Over 115–158 (NKGPKCLMANSTWGYPFHDGDYLNDEALWNKCREPLNVVPWNLT) the chain is Extracellular. N124 and N156 each carry an N-linked (GlcNAc...) asparagine glycan. The helical transmembrane segment at 159–179 (LFSILLVVGGIQMVLCAIQVV) threads the bilayer. The Cytoplasmic segment spans residues 180-202 (NGLLGTLCGDCQCCGCCGGDGPV).

The protein belongs to the L6 tetraspanin family. Post-translationally, N-glycosylated. Glycosylation is required for the growth inhibitory effect. As to expression, jejunum and liver.

Its subcellular location is the membrane. Its function is as follows. Regulates the adhesive and proliferative status of intestinal epithelial cells. Can mediate density-dependent cell proliferation. The sequence is that of Transmembrane 4 L6 family member 4 (TM4SF4) from Homo sapiens (Human).